A 127-amino-acid polypeptide reads, in one-letter code: Small ribosomal subunit protein uS11 (127 aa).

The protein belongs to the universal ribosomal protein uS11 family. In terms of assembly, part of the 30S ribosomal subunit. Interacts with proteins S7 and S18. Binds to IF-3.

Functionally, located on the platform of the 30S subunit, it bridges several disparate RNA helices of the 16S rRNA. Forms part of the Shine-Dalgarno cleft in the 70S ribosome. This Anaeromyxobacter dehalogenans (strain 2CP-C) protein is Small ribosomal subunit protein uS11.